We begin with the raw amino-acid sequence, 357 residues long: COP9 signalosome complex subunit 5a (357 aa).

M1 bears the N-acetylmethionine mark. Residues 59–196 enclose the MPN domain; it reads VHISALALLK…IGAFRTYPEG (138 aa). Zn(2+) is bound by residues H142, H144, and D155. The JAMM motif signature appears at 142–155; it reads HSHPGYGCWLSGID. A disordered region spans residues 338–357; sequence ARQSKKSADDSSDPEPMITS.

The protein belongs to the peptidase M67A family. CSN5 subfamily. In terms of assembly, component of the CSN complex, probably composed of CSN1, CSN2, CSN3, CSN4, CSN5 (CSN5A or CSN5B), CSN6 (CSN6A or CSN6B), CSN7 and CSN8. CSN5A or CSN5B are present within distinct CSN complexes each containing only one copy of CSN5. Interacts with itself. In the complex, it is located in the center and probably interacts directly with CSN4 and CSN6A or CSN6B. Present also in subcomplex forms which inculdes CSN3. Also exists as monomeric form. Interacts with CYT1 in vitro, but not in planta. A divalent metal cation serves as cofactor. As to expression, ubiquitously expressed. Highly expressed in flowers and roots. Expressed at lower level in seedlings and siliques.

It localises to the cytoplasm. The protein localises to the nucleus. In terms of biological role, probable protease subunit of the COP9 signalosome complex (CSN), a complex involved in various cellular and developmental processes such as photomorphogenesis and auxin and jasmonate responses. The CSN complex is an essential regulator of the ubiquitin (Ubl) conjugation pathway by mediating the deneddylation of the cullin subunits of the SCF-type E3 ligase complexes, leading to decrease the Ubl ligase activity of SCF. In the complex, it probably acts as the catalytic center that mediates the cleavage of Nedd8 from cullins. It however has no metalloprotease activity by itself and requires the other subunits of the CSN complex. The CSN complex is involved in repression of photomorphogenesis in darkness by regulating the activity of COP1-containing Ubl ligase complexes. The complex is also required for degradation of PSIAA6 by regulating the activity of the Ubl ligase SCF-TIR complex. Involved in CSN's deneddylation/derubylation activity. Required for the deneddylation of all cullins. Essential for the structural integrity of the CSN holocomplex. The chain is COP9 signalosome complex subunit 5a from Arabidopsis thaliana (Mouse-ear cress).